Here is an 82-residue protein sequence, read N- to C-terminus: uncharacterized protein (82 aa).

This is an uncharacterized protein from Ictalurid herpesvirus 1 (strain Auburn) (IcHV-1).